The following is an 898-amino-acid chain: Fasciclin-2 (898 aa).

An N-terminal signal peptide occupies residues methionine 1 to alanine 22. The Extracellular segment spans residues glutamine 23 to serine 764. 5 Ig-like C2-type domains span residues proline 31–serine 124, proline 134–arginine 219, proline 226–threonine 316, proline 321–methionine 423, and proline 428–arginine 525. N-linked (GlcNAc...) asparagine glycosylation is found at asparagine 35, asparagine 51, asparagine 149, asparagine 192, asparagine 297, and asparagine 328. Cysteine 48 and cysteine 113 are joined by a disulfide. Cystine bridges form between cysteine 156-cysteine 203 and cysteine 248-cysteine 300. Cysteine 343 and cysteine 407 are disulfide-bonded. Asparagine 447, asparagine 457, and asparagine 580 each carry an N-linked (GlcNAc...) asparagine glycan. Cysteine 450 and cysteine 509 are oxidised to a cystine. 2 consecutive Fibronectin type-III domains span residues alanine 532–isoleucine 626 and glycine 644–proline 745. A helical transmembrane segment spans residues alanine 765–valine 782. Residues aspartate 783 to valine 898 are Cytoplasmic-facing.

The protein localises to the membrane. Neuronal recognition molecule. Involved in a pathway recognition for axons during the development of nerve fascicles. In Schistocerca americana (American grasshopper), this protein is Fasciclin-2 (FAS2).